The primary structure comprises 97 residues: Plastocyanin (97 aa).

Residues 1–97 (AEVKLGADDG…AGMKGEVTVT (97 aa)) form the Plastocyanin-like domain. 4 residues coordinate Cu cation: His-37, Cys-82, His-85, and Met-90.

This sequence belongs to the plastocyanin family. The cofactor is Cu(2+).

Its subcellular location is the plastid. It is found in the chloroplast thylakoid membrane. Its function is as follows. Participates in electron transfer between P700 and the cytochrome b6-f complex in photosystem I. This is Plastocyanin (PETE) from Daucus carota (Wild carrot).